The chain runs to 159 residues: Large ribosomal subunit protein mL50 (159 aa).

This sequence belongs to the mitochondrion-specific ribosomal protein mL50 family. As to quaternary structure, component of the mitochondrial ribosome large subunit (39S) which comprises a 16S rRNA and about 50 distinct proteins.

It is found in the mitochondrion. In Mus musculus (Mouse), this protein is Large ribosomal subunit protein mL50 (Mrpl50).